Here is a 402-residue protein sequence, read N- to C-terminus: 1-deoxy-D-xylulose 5-phosphate reductoisomerase (402 aa).

NADPH is bound by residues Thr21, Gly22, Ser23, Ile24, Gly47, Asn50, and Asn127. Residue Lys128 participates in 1-deoxy-D-xylulose 5-phosphate binding. Glu129 is an NADPH binding site. A Mn(2+)-binding site is contributed by Asp151. Ser152, Glu153, Ser177, and His200 together coordinate 1-deoxy-D-xylulose 5-phosphate. Glu153 is a binding site for Mn(2+). Gly206 is a binding site for NADPH. 1-deoxy-D-xylulose 5-phosphate contacts are provided by Ser213, Asn218, Lys219, and Glu222. Glu222 lines the Mn(2+) pocket.

Belongs to the DXR family. It depends on Mg(2+) as a cofactor. Requires Mn(2+) as cofactor.

It catalyses the reaction 2-C-methyl-D-erythritol 4-phosphate + NADP(+) = 1-deoxy-D-xylulose 5-phosphate + NADPH + H(+). Its pathway is isoprenoid biosynthesis; isopentenyl diphosphate biosynthesis via DXP pathway; isopentenyl diphosphate from 1-deoxy-D-xylulose 5-phosphate: step 1/6. Functionally, catalyzes the NADPH-dependent rearrangement and reduction of 1-deoxy-D-xylulose-5-phosphate (DXP) to 2-C-methyl-D-erythritol 4-phosphate (MEP). This Mycobacterium marinum (strain ATCC BAA-535 / M) protein is 1-deoxy-D-xylulose 5-phosphate reductoisomerase.